The chain runs to 217 residues: MANHIYLAGDSTVQTYGDSTNQGGWGQFLGSHLPEHIQVINRAIGGRSSKTFVEEGRLQAILDVIEPDDWLFVQMGHNDASKNKPERYTEPYTTYKQYLKQYIAGAREKGAHPLLITPVARFHYENGVFLNDFPDYCIAMKQTAAEENVQLIDLMEKSLAFFTEKGEEKVYTYFMISEGINDYTHFTKKGANEMAKLVAKGIKELGLPLTESIIKER.

Catalysis depends on Ser-11, which acts as the Nucleophile. Catalysis depends on residues Glu-178 and His-185.

This sequence belongs to the 'GDSL' lipolytic enzyme family.

Functionally, may play a role in the degradation of rhamnogalacturonan derived from plant cell walls. Probably has broad substrate specificity and may degrade several types of acetylated substrates. The polypeptide is Probable rhamnogalacturonan acetylesterase YesY (yesY) (Bacillus subtilis (strain 168)).